The following is a 468-amino-acid chain: Glycine--tRNA ligase (468 aa).

Residues Arg101 and Glu170 each contribute to the substrate site. ATP-binding positions include 202 to 204 (RNE), 212 to 217 (FRTREF), 289 to 290 (EL), and 333 to 336 (GLTR). Residue 217–221 (FEQME) coordinates substrate. 329–333 (EPAAG) contacts substrate.

Belongs to the class-II aminoacyl-tRNA synthetase family. As to quaternary structure, homodimer.

It localises to the cytoplasm. It carries out the reaction tRNA(Gly) + glycine + ATP = glycyl-tRNA(Gly) + AMP + diphosphate. Catalyzes the attachment of glycine to tRNA(Gly). This Mycolicibacterium vanbaalenii (strain DSM 7251 / JCM 13017 / BCRC 16820 / KCTC 9966 / NRRL B-24157 / PYR-1) (Mycobacterium vanbaalenii) protein is Glycine--tRNA ligase.